Consider the following 510-residue polypeptide: UDP-N-acetylmuramate--L-alanine ligase (510 aa).

The segment at 1-25 is disordered; the sequence is MVETVGGKDAVAPAPARSPSPPAKN. Position 140 to 146 (140 to 146) interacts with ATP; it reads GTHGKTT.

It belongs to the MurCDEF family.

The protein resides in the cytoplasm. The catalysed reaction is UDP-N-acetyl-alpha-D-muramate + L-alanine + ATP = UDP-N-acetyl-alpha-D-muramoyl-L-alanine + ADP + phosphate + H(+). The protein operates within cell wall biogenesis; peptidoglycan biosynthesis. Functionally, cell wall formation. The polypeptide is UDP-N-acetylmuramate--L-alanine ligase (Synechococcus sp. (strain JA-3-3Ab) (Cyanobacteria bacterium Yellowstone A-Prime)).